The following is a 677-amino-acid chain: Transcription factor IIIB 90 kDa subunit (677 aa).

The TFIIB-type zinc-finger motif lies at 2-33; it reads TGRVCRGCGGTDIELDAARGDAVCTACGSVLE. Zn(2+) is bound by residues C6, C9, C25, and C28. 2 tandem repeats follow at residues 91–172 and 185–269. Disordered stretches follow at residues 340-368 and 385-413; these read KGGLASLAKDGSTEDTASSLCGEEDTEDE and LLGGAPGSSEAAGSPEWGGRPPALGSLLD. T365 bears the Phosphothreonine mark. S450 is subject to Phosphoserine. 2 disordered regions span residues 501 to 521 and 544 to 653; these read YKEHKPKKSCKRREPIQASTA and RGLS…EDGE. S553 is subject to Phosphoserine. A compositionally biased stretch (acidic residues) spans 640-653; it reads EEADEEEPDEEDGE.

The protein belongs to the TFIIB family. In terms of assembly, TFIIIB comprises at least the TATA-binding protein (TBP) and the B-related factor 1 (BRF1/TFIIIB90). Interacts with BDP1. Interacts with MAF1.

The protein localises to the nucleus. General activator of RNA polymerase which utilizes different TFIIIB complexes at structurally distinct promoters. The isoform 1 is involved in the transcription of tRNA, adenovirus VA1, 7SL and 5S RNA. Isoform 2 is required for transcription of the U6 promoter. In Homo sapiens (Human), this protein is Transcription factor IIIB 90 kDa subunit (BRF1).